The sequence spans 198 residues: Recombination protein RecR (198 aa).

The C4-type zinc-finger motif lies at C57–C72. The region spanning S80 to S175 is the Toprim domain.

The protein belongs to the RecR family.

Its function is as follows. May play a role in DNA repair. It seems to be involved in an RecBC-independent recombinational process of DNA repair. It may act with RecF and RecO. This Staphylococcus carnosus (strain TM300) protein is Recombination protein RecR.